The primary structure comprises 36 residues: U1-ectatotoxin-Et1b subunit B (36 aa).

Cys-11 and Cys-33 are joined by a disulfide.

It belongs to the ectatomin family. Ectatomin-Et subfamily. In terms of assembly, heterodimer of subunits A and B; disulfide-linked. Expressed by the venom gland.

The protein localises to the secreted. It localises to the target cell membrane. In Ectatomma tuberculatum (Selva ant), this protein is U1-ectatotoxin-Et1b subunit B.